Reading from the N-terminus, the 64-residue chain is MPKIKSNSGAAKRFKKTAHGFKHKQSFRSHILTKKSTKRKRQLRGMKQIHDADKQLIQRMLPNL.

Positions 1 to 54 (MPKIKSNSGAAKRFKKTAHGFKHKQSFRSHILTKKSTKRKRQLRGMKQIHDADK) are disordered. The span at 12–44 (KRFKKTAHGFKHKQSFRSHILTKKSTKRKRQLR) shows a compositional bias: basic residues.

This sequence belongs to the bacterial ribosomal protein bL35 family.

The chain is Large ribosomal subunit protein bL35 from Chromohalobacter salexigens (strain ATCC BAA-138 / DSM 3043 / CIP 106854 / NCIMB 13768 / 1H11).